The sequence spans 303 residues: Phytochrome-associated serine/threonine-protein phosphatase (303 aa).

Zn(2+) contacts are provided by D50, H52, D78, and N110. The active-site Proton donor is the H111. The Zn(2+) site is built by H160 and H234.

The protein belongs to the PPP phosphatase family. PP-6 (PP-V) subfamily. As to quaternary structure, interacts with PHYA and PHYB, mostly when they are phosphorylated and in Pfr forms. It depends on Zn(2+) as a cofactor. In terms of tissue distribution, mostly expressed in flowers and stems.

The protein resides in the cytoplasm. It carries out the reaction O-phospho-L-seryl-[protein] + H2O = L-seryl-[protein] + phosphate. The catalysed reaction is O-phospho-L-threonyl-[protein] + H2O = L-threonyl-[protein] + phosphate. In terms of biological role, catalytic subunit of protein phosphatase 6 (PP6). Dephosphorylates phosphorylated phytochromes, with a preference toward Pfr forms. Plays a major role in the photoperiodic control of flowering time in long days by modulating phytochrome signals in flowering time control. The sequence is that of Phytochrome-associated serine/threonine-protein phosphatase from Pisum sativum (Garden pea).